The following is a 300-amino-acid chain: Bifunctional protein FolD (300 aa).

NADP(+) is bound by residues glycine 169 to glycine 171, serine 196, and isoleucine 237.

It belongs to the tetrahydrofolate dehydrogenase/cyclohydrolase family. As to quaternary structure, homodimer.

It catalyses the reaction (6R)-5,10-methylene-5,6,7,8-tetrahydrofolate + NADP(+) = (6R)-5,10-methenyltetrahydrofolate + NADPH. The enzyme catalyses (6R)-5,10-methenyltetrahydrofolate + H2O = (6R)-10-formyltetrahydrofolate + H(+). Its pathway is one-carbon metabolism; tetrahydrofolate interconversion. In terms of biological role, catalyzes the oxidation of 5,10-methylenetetrahydrofolate to 5,10-methenyltetrahydrofolate and then the hydrolysis of 5,10-methenyltetrahydrofolate to 10-formyltetrahydrofolate. This Clavibacter sepedonicus (Clavibacter michiganensis subsp. sepedonicus) protein is Bifunctional protein FolD.